Consider the following 954-residue polypeptide: Kinesin-like protein KIN-7A (954 aa).

Residues 1-29 (MGVSRPPSTPASKIERTPMSTPTPGGSTR) form a disordered region. Positions 17-28 (TPMSTPTPGGST) are enriched in low complexity. The region spanning 34–354 (KIFVTVRVRP…LFFATCAKEV (321 aa)) is the Kinesin motor domain. 119–126 (GQTSSGKT) contributes to the ATP binding site. Coiled-coil stretches lie at residues 363-436 (VVSD…GDNQ) and 480-588 (LKHE…LVMS). Disordered stretches follow at residues 624 to 689 (PNLI…SSVN) and 741 to 762 (GKTN…DGPD). Residues 630 to 639 (PCSPLSSSRP) are compositionally biased toward low complexity. Basic and acidic residues-rich tracts occupy residues 640-660 (LEPE…EGSE) and 666-681 (KSED…ETPR).

The protein belongs to the TRAFAC class myosin-kinesin ATPase superfamily. Kinesin family. KIN-7 subfamily. Ubiquitous with a preferential expression in the shoot apical meristem (SAM).

In terms of biological role, may be essential to promote the progression of cytokinesis during node-internode differentiation. In Oryza sativa subsp. japonica (Rice), this protein is Kinesin-like protein KIN-7A.